The following is a 321-amino-acid chain: MRVSVANHLGEDAGHLALRRDVYSGLQKTPKSLPPKWFYDTVGSELFDQITRLPEYYPTRAEAEILRARSAEVASACRADTLVELGSGTSEKTRMLLDALRHRGSLRRFVPFDVDASVLSATATAIQREYSGVEINAVCGDFEEHLTEIPRGGRRLFVFLGSTIGNLTPGPRAQFLTALAGVMRPGDSLLLGTDLVKDAARLVRAYDDPGGVTAQFNRNVLAVINRELEADFDVDAFQHVARWNSAEERIEMWLRADGRQRVRVGALDLTVDFDAGEEMLTEVSCKFRPQAVGAELAAAGLHRIRWWTDEAGDFGLSLAAK.

Y56 serves as a coordination point for L-histidine. S-adenosyl-L-methionine contacts are provided by residues G86, K92, D113, and D141–F142. L-histidine contacts are provided by residues N166, Y206, and E282–S284.

Belongs to the methyltransferase superfamily. EgtD family. Monomer.

It carries out the reaction L-histidine + 3 S-adenosyl-L-methionine = hercynine + 3 S-adenosyl-L-homocysteine + 3 H(+). The protein operates within amino-acid biosynthesis; ergothioneine biosynthesis. Functionally, catalyzes the SAM-dependent triple methylation of the alpha-amino group of histidine to form hercynine, a step in the biosynthesis pathway of ergothioneine (ERG). ERG is one of the major redox buffers which protects bacteria against redox stressors and antibiotics; loss of ERG or mycothiol (MSH, the other major redox buffer in this bacteria) leads to respiratory alterations and bioenergetic deficiencies that negatively impact virulence. This is Histidine N-alpha-methyltransferase (egtD) from Mycobacterium tuberculosis (strain CDC 1551 / Oshkosh).